A 345-amino-acid polypeptide reads, in one-letter code: Protein RecA (345 aa).

ATP is bound at residue 65–72 (GPESSGKT).

Belongs to the RecA family.

The protein resides in the cytoplasm. In terms of biological role, can catalyze the hydrolysis of ATP in the presence of single-stranded DNA, the ATP-dependent uptake of single-stranded DNA by duplex DNA, and the ATP-dependent hybridization of homologous single-stranded DNAs. It interacts with LexA causing its activation and leading to its autocatalytic cleavage. This chain is Protein RecA, found in Hahella chejuensis (strain KCTC 2396).